A 555-amino-acid chain; its full sequence is B3 domain-containing protein REM10 (555 aa).

4 DNA-binding regions (TF-B3) span residues 11-103 (NPQF…LGPS), 150-247 (CFVA…FPMT), 276-372 (SFVA…LPLN), and 460-554 (SQNR…FCSK).

The protein localises to the nucleus. The protein is B3 domain-containing protein REM10 (REM10) of Arabidopsis thaliana (Mouse-ear cress).